The following is a 406-amino-acid chain: MNKPVAPNSYKTGPDEEGMFGIFGGRFVAETLMPLILELQQAYETARNDPEFKAELNALSTFYAGRPSKLYYAEGLSKHLGGAKIYFKREDLNHTGSHKINNCLGQILLAKRMGKTRIIAETGAGQHGVASATVAARFGLPCIVYVGATDVERQKPNVFRMKLLGAEVKPVSAGNGTLKDAMNEALRDWVTNVEDTYYLIGTAAGPHPYPELVRDFQSVIGTEARQQILEQEGRLPDVIVAAVGGGSNAIGLFHPFLDDASVKIVGVEAGGRGLEGEEHCASMSAGRPGVLHGNRTYLLQNADGQILEGHSVSAGLDYPGVGPEHSWLKDSGRVDYVPILDNEALDAFQLCTRTEGIIPALESAHAIAQAVKMAPTMGKDKVMIVNLSGRGDKDVHTVGKLLGMDI.

An N6-(pyridoxal phosphate)lysine modification is found at K99.

This sequence belongs to the TrpB family. In terms of assembly, tetramer of two alpha and two beta chains. Pyridoxal 5'-phosphate serves as cofactor.

The enzyme catalyses (1S,2R)-1-C-(indol-3-yl)glycerol 3-phosphate + L-serine = D-glyceraldehyde 3-phosphate + L-tryptophan + H2O. Its pathway is amino-acid biosynthesis; L-tryptophan biosynthesis; L-tryptophan from chorismate: step 5/5. Its function is as follows. The beta subunit is responsible for the synthesis of L-tryptophan from indole and L-serine. This chain is Tryptophan synthase beta chain, found in Brucella abortus (strain 2308).